The chain runs to 350 residues: Cytosolic Fe-S cluster assembly factor NBP35 (350 aa).

Residues 1–30 (MENGDIPEDANEHCPGPQSESAGKSDSCAG) are disordered. The [4Fe-4S] cluster site is built by cysteine 14, cysteine 28, cysteine 31, and cysteine 37. 67–74 (GKGGVGKS) is a binding site for ATP.

This sequence belongs to the Mrp/NBP35 ATP-binding proteins family. NUBP1/NBP35 subfamily. As to quaternary structure, homodimer and homotetramer. Predominantly homodimeric. [4Fe-4S] cluster is required as a cofactor.

It localises to the cytoplasm. Its function is as follows. Component of the cytosolic iron-sulfur (Fe-S) protein assembly (CIA) machinery. Required for maturation of extramitochondrial Fe-S proteins. Functions as a Fe-S scaffold, mediating the de novo assembly of an Fe-S cluster and its transfer to target apoproteins. Essential for embryo development. This Arabidopsis thaliana (Mouse-ear cress) protein is Cytosolic Fe-S cluster assembly factor NBP35.